The following is a 202-amino-acid chain: GTP-binding protein rho1 (202 aa).

13–20 (GDGACGKT) is a GTP binding site. The Effector region motif lies at 35 to 43 (YVPTVFENY). GTP contacts are provided by residues 60–64 (DTAGQ) and 118–121 (CKAD). Cys199 is subject to Cysteine methyl ester. Cys199 is lipidated: S-geranylgeranyl cysteine. Positions 200-202 (ILL) are cleaved as a propeptide — removed in mature form.

This sequence belongs to the small GTPase superfamily. Rho family.

It localises to the cell membrane. Involved in the regulation of cell wall growth and actin cytoskeleton organization. Activates (1,3)-beta-D-glucan synthase. In Schizosaccharomyces pombe (strain 972 / ATCC 24843) (Fission yeast), this protein is GTP-binding protein rho1 (rho1).